A 178-amino-acid polypeptide reads, in one-letter code: Ribosome maturation factor RimP (178 aa).

It belongs to the RimP family.

It is found in the cytoplasm. Its function is as follows. Required for maturation of 30S ribosomal subunits. This chain is Ribosome maturation factor RimP, found in Mycobacterium avium (strain 104).